A 96-amino-acid polypeptide reads, in one-letter code: Large ribosomal subunit protein bL28 (96 aa).

Belongs to the bacterial ribosomal protein bL28 family.

This Methylocella silvestris (strain DSM 15510 / CIP 108128 / LMG 27833 / NCIMB 13906 / BL2) protein is Large ribosomal subunit protein bL28.